A 234-amino-acid polypeptide reads, in one-letter code: Synaptogyrin-4 (234 aa).

The MARVEL domain maps to 18 to 169; that stretch reads FLRRPKTITR…QAYLAFQDLR (152 aa). 4 helical membrane passes run 25 to 45, 66 to 86, 104 to 124, and 145 to 165; these read ITRV…LTDG, CSFA…FLVL, LLDF…FCFL, and AAIA…YLAF.

The protein belongs to the synaptogyrin family.

The protein resides in the membrane. In Homo sapiens (Human), this protein is Synaptogyrin-4 (SYNGR4).